The chain runs to 547 residues: MFS-type transporter ungB (547 aa).

The next 14 helical transmembrane spans lie at 14–34, 50–70, 80–100, 111–131, 138–158, 169–189, 210–230, 238–258, 279–299, 316–336, 343–363, 366–386, 392–412, and 475–495; these read LLVT…ETVL, DVGW…MAWG, WVFL…GVSP, IAGL…SNTI, IYLG…PVIG, WCFF…VFCL, LLGS…LEWG, SWRV…FAVV, LGLI…VYYL, LAIL…GILV, TPFL…LSSL, ASGL…IGLG, VVPS…TLCF, and AVSE…LGSA. The tract at residues 503 to 547 is disordered; it reads PGHKEATEKVEGEGQGQGQQQEQDQGQGWGEVGESHALAHPTADK. Basic and acidic residues predominate over residues 504 to 514; sequence GHKEATEKVEG.

This sequence belongs to the major facilitator superfamily. TCR/Tet family.

It localises to the membrane. MFS-type transporter; part of the gene cluster that mediates the biosynthesis of the unguisins, gamma-aminobutyric acid (GABA)-containing fungal cyclic heptapeptides with the amino acid sequence cyclo-(D-Ala1-D-Val2-L-Phe3-D-Val4-D-Ala5-D-Trp6-GABA7) for unguisin A and cyclo-(D-Ala1-D-Val2-L-Leu3-D-Val4-D-Ala5-D-Trp6-GABA7) for unguisin B. May be involved in the secretion of unguisins. This is MFS-type transporter ungB from Aspergillus violaceofuscus (strain CBS 115571).